The primary structure comprises 1602 residues: MVDASGRAAAEGWRKMEAPPDGAADLVPLDRYDAARAKIAANLQWICAKAYGRDNIPEDLRDPFYVDQYEQEHIKPPVIKLLLSSELYCRVCSLILKGDQVAALQGHQSVIQALSRKGIYVMESDDTPVTESDLSRAPIKMSAHMAMVDALMMAYTVEMISIEKVVASVKRFSTFSASKELPYDLEDAMVFWINKVNLKMREITEKEVKLKQQLLESPAHQKVRYRREHLSARQSPYFPLLEDLMRDGSDGAALLAVIHYYCPEQMKLDDICLKEVTSMADSLYNIRLLREFSNEYLNKCFYLTLEDMLYAPLVLKPNVMVFIAELFWWFENVKPDFVQPRDVQELKDAKTVLHQKSSRPPVPISNATKRSFLGSPAAGTLAELQPPVQLPAEGCHRHYLHPEEPEYLGKGTAAFSPSHPLLPLRQKQQKSIQGEDIPDQRHRSNSLTRVDGQPRGAAIAWPEKKTRPASQPTPFALHHAASCEVDPSSGDSISLARSISKDSLASNIVNLTPQNQPHPTATKSHGKSLLSNVSIEDEEEELVAIVRADVVPQQADPEFPRASPRALGLTANARSPQGQLDTSESKPDSFFLEPLMPAVLKPAKEKQVITKEDERGEGRPRSIVSRRPSEGPQPLVRRKMTGSRDLNRTFTPIPCSEFPMGIDPTETGPLSVETAGEVCGGPLALGGFDPFPQGPSTDGFFLHVGRADEDTEGRLYVSCSKSPNSHDSEPWTLLRQDSDSDVVDIEEAEHDFMGEAHPVVFSRYIGEEESAKLQEDMKVKEHEDKDDASGRSSPCLSTASQMSSVSMASGSVKMTSFAERKLQRLNSCETKSSTSSSQKTTPDASESCPAPLTTWRQKREQSPSQHGKDPASLLASELVQLHMQLEEKRRAIEAQKKKMEALSARQRLKLGKAAFLHVVKKGKAEAAPPLRPEHFAKEYSQHNGEDCGDAVSKTEDFLVKEEQREELLHEPQDVDKESLAFAQQHKAKDPVALHELERNKVISAALLEDTVGEVVDVNECDLSIEKLNETISTLQQAILKISQQQEQLLMKSPTVPVPGSKNNSQDHKVKAPVHFVEPLSPTGVAGHRKAPRLGQGRNSRSGRPAELKVPKDRPQGSSRSKTPTPSVETLPHLRPFPASSHPRTPTDPGLDSALEPSGDPHGKCLFDSYRLHDESNQRTLTLSSSKDANILSEQMSLKEVLDASVKEVGSSSSDVSGKESVPVEEPLRSRASLIEVDLSDLKAPDEDGELVSLDGSADLVSEGDQKPGVGFFFKDEQKAEDELAKKRAAFLLKQQRKAEEARVRKQQLEAEVELKRDEARRKAEEDRVRKEEEKARRELIKQEYLRRKQQQILEEQGLGKPKSKPKKPRPKSVHREESCSDSGTKCSSTPDNLSRTQSGSSLSLASAATTEPESVHSGGTPSQRVESMEALPILSRNPSRSTDRDWETASAASSLASVAEYTGPKLFKEPSSKSNKPIIHNAISHCCLAGKVNEPHKNSILEELEKCDANHYIILFRDAGCQFRALYCYYPDTEEIYKLTGTGPKNITKKMIDKLYKYSSDRKQFNLIPAKTMSVSVDALTIHNHLWQPKRPAVPKKAQTRK.

The 116-residue stretch at 216-331 folds into the Calponin-homology (CH) domain; the sequence is ESPAHQKVRY…FIAELFWWFE (116 aa). Ser-217, Ser-371, Ser-375, Ser-416, and Ser-431 each carry phosphoserine. The interval 426–471 is disordered; sequence QKQQKSIQGEDIPDQRHRSNSLTRVDGQPRGAAIAWPEKKTRPASQ. Thr-512 carries the phosphothreonine modification. Ser-563, Ser-575, and Ser-589 each carry phosphoserine. The span at 603 to 620 shows a compositional bias: basic and acidic residues; sequence AKEKQVITKEDERGEGRP. A disordered region spans residues 603 to 637; that stretch reads AKEKQVITKEDERGEGRPRSIVSRRPSEGPQPLVR. Phosphoserine is present on residues Ser-629, Ser-722, Ser-728, Ser-738, and Ser-740. Residues 772–789 are compositionally biased toward basic and acidic residues; that stretch reads KLQEDMKVKEHEDKDDAS. Disordered regions lie at residues 772 to 808 and 825 to 870; these read KLQE…VSMA and LNSC…GKDP. Low complexity-rich tracts occupy residues 797–808 and 830–841; these read STASQMSSVSMA and TKSSTSSSQKTT. Residues 857–869 show a composition bias toward basic and acidic residues; the sequence is QKREQSPSQHGKD. Residues 871-892 form a sufficient for interaction with SPTBN1 region; it reads ASLLASELVQLHMQLEEKRRAI. 2 coiled-coil regions span residues 873–909 and 1016–1048; these read LLAS…QRLK and DVNE…QEQL. Residues 903–922 form a sufficient for interaction with calmodulin region; sequence SARQRLKLGKAAFLHVVKKG. Disordered stretches follow at residues 1075 to 1165, 1206 to 1226, and 1301 to 1448; these read FVEP…GKCL, KEVG…VEEP, and ARVR…DWET. Residue Ser-1080 is modified to Phosphoserine. A compositionally biased stretch (basic and acidic residues) spans 1103–1114; that stretch reads RPAELKVPKDRP. Residues 1115-1127 show a composition bias toward polar residues; that stretch reads QGSSRSKTPTPSV. The segment covering 1206–1220 has biased composition (low complexity); it reads KEVGSSSSDVSGKES. The stretch at 1291–1343 forms a coiled coil; the sequence is LLKQQRKAEEARVRKQQLEAEVELKRDEARRKAEEDRVRKEEEKARRELIKQE. Basic and acidic residues predominate over residues 1301–1346; sequence ARVRKQQLEAEVELKRDEARRKAEEDRVRKEEEKARRELIKQEYLR. Positions 1361 to 1372 are enriched in basic residues; the sequence is PKSKPKKPRPKS. A compositionally biased stretch (polar residues) spans 1380–1392; sequence SDSGTKCSSTPDN. Residues 1393 to 1410 show a composition bias toward low complexity; it reads LSRTQSGSSLSLASAATT. Phosphoserine is present on residues Ser-1398 and Ser-1427. Residues 1463–1597 form the CKK domain; it reads GPKLFKEPSS…QPKRPAVPKK (135 aa). Tyr-1537 carries the post-translational modification Phosphotyrosine.

The protein belongs to the CAMSAP1 family. As to quaternary structure, interacts with spectrin via SPTBN1; the interaction is direct. Interacts with calmodulin; calcium-dependent it prevents interaction with spectrin.

Its subcellular location is the cytoplasm. The protein resides in the cytoskeleton. Its function is as follows. Key microtubule-organizing protein that specifically binds the minus-end of non-centrosomal microtubules and regulates their dynamics and organization. Specifically recognizes growing microtubule minus-ends and stabilizes microtubules. Acts on free microtubule minus-ends that are not capped by microtubule-nucleating proteins or other factors and protects microtubule minus-ends from depolymerization. In contrast to CAMSAP2 and CAMSAP3, tracks along the growing tips of minus-end microtubules without significantly affecting the polymerization rate: binds at the very tip of the microtubules minus-end and acts as a minus-end tracking protein (-TIP) that dissociates from microtubules after allowing tubulin incorporation. Through interaction with spectrin may regulate neurite outgrowth. This Homo sapiens (Human) protein is Calmodulin-regulated spectrin-associated protein 1 (CAMSAP1).